The sequence spans 334 residues: HTH-type transcriptional regulator RegA (334 aa).

The region spanning 1 to 57 (MAASIKDVAREARVSIATVSRVLNNVDVVNEETKKKVMEAIKKLDYRPNIVARSLKT) is the HTH lacI-type domain. Positions 5 to 24 (IKDVAREARVSIATVSRVLN) form a DNA-binding region, H-T-H motif.

Involved in the regulation of amylase production. The protein is HTH-type transcriptional regulator RegA (regA) of Clostridium acetobutylicum (strain ATCC 824 / DSM 792 / JCM 1419 / IAM 19013 / LMG 5710 / NBRC 13948 / NRRL B-527 / VKM B-1787 / 2291 / W).